The chain runs to 206 residues: MTINKEGLRVDACSGDPMSIFGLWYEEVLRVKSVREPSAMVLATCDSENRPSARVVLLKRYSDAGFEFYTNLESRKAREIALNPCVSLVFDWRPIYKQVRVEGIAEFMDASESDAYFASRSRESQIGAWCSRQSMILEDRDVLLSKIELMEREYEGREIPRPKFWGGIRVVPNVIEFWMDGKHRLHDRRQYSKNIDGTWTSVYLYP.

FMN is bound by residues 54-59, 69-70, R75, K76, and Q98; these read RVVLLK and YT. K59 is a substrate binding site. 3 residues coordinate substrate: Y116, R120, and S124. Residues 133-134 and W178 contribute to the FMN site; that span reads QS. 184-186 provides a ligand contact to substrate; it reads RLH. R188 serves as a coordination point for FMN.

This sequence belongs to the pyridoxamine 5'-phosphate oxidase family. Homodimer. The cofactor is FMN.

The catalysed reaction is pyridoxamine 5'-phosphate + O2 + H2O = pyridoxal 5'-phosphate + H2O2 + NH4(+). It carries out the reaction pyridoxine 5'-phosphate + O2 = pyridoxal 5'-phosphate + H2O2. It functions in the pathway cofactor metabolism; pyridoxal 5'-phosphate salvage; pyridoxal 5'-phosphate from pyridoxamine 5'-phosphate: step 1/1. Its pathway is cofactor metabolism; pyridoxal 5'-phosphate salvage; pyridoxal 5'-phosphate from pyridoxine 5'-phosphate: step 1/1. Catalyzes the oxidation of either pyridoxine 5'-phosphate (PNP) or pyridoxamine 5'-phosphate (PMP) into pyridoxal 5'-phosphate (PLP). This chain is Pyridoxine/pyridoxamine 5'-phosphate oxidase, found in Anaplasma phagocytophilum (strain HZ).